The following is an 807-amino-acid chain: AP-5 complex subunit zeta-1 (807 aa).

In terms of assembly, probably part of the adaptor protein complex 5 (AP-5) a tetramer composed of AP5B1, AP5M1, AP5S1 and AP5Z1. Interacts with ZFYVE26 and SPG11.

It localises to the cytoplasm. It is found in the nucleus. Functionally, as part of AP-5, a probable fifth adaptor protein complex it may be involved in endosomal transport. The protein is AP-5 complex subunit zeta-1 (Ap5z1) of Mus musculus (Mouse).